The sequence spans 322 residues: uncharacterized protein (322 aa).

It belongs to the glycosyltransferase 2 family.

This is an uncharacterized protein from Nostoc sp. (strain PCC 7120 / SAG 25.82 / UTEX 2576).